Reading from the N-terminus, the 1045-residue chain is Collagen alpha-1(VI) chain (1045 aa).

Residues 1–24 form the signal peptide; sequence MKMLQGRLPLTVLHLFLLLGGGMT. The VWFA 1 domain maps to 65–255; the sequence is DIFFVLDTSE…LTDDEIDNTI (191 aa). A disordered region spans residues 277-613; that stretch reads PSRGLSGPSG…GPPGPGGPPG (337 aa). Residues 280-540 are triple-helical region; it reads GLSGPSGPPG…RGDDGRPGNG (261 aa). The span at 297–309 shows a compositional bias: low complexity; sequence PGLPGDRGLPGDP. Basic and acidic residues predominate over residues 327 to 360; it reads QGIRGEKGGRGAKGSKGDKGKRGIDGVDGQKGED. Positions 375–392 are enriched in low complexity; that stretch reads DGAPGSSGPKGDPGPYGT. Residues 400-409 show a composition bias toward gly residues; the sequence is GTPGTGGRPG. 2 short sequence motifs (cell attachment site) span residues 501-503 and 554-556; these read RGD. The segment covering 600-613 has biased composition (pro residues); the sequence is EGPPGPPGPGGPPG. 2 consecutive VWFA domains span residues 638-825 and 849-1035; these read DLLF…LHNV and DITM…YQSI.

The protein belongs to the type VI collagen family.

The protein resides in the secreted. It localises to the extracellular space. It is found in the extracellular matrix. Collagen VI acts as a cell-binding protein. In Xenopus laevis (African clawed frog), this protein is Collagen alpha-1(VI) chain (col6a1).